Here is a 393-residue protein sequence, read N- to C-terminus: Succinate--CoA ligase [ADP-forming] subunit beta (393 aa).

An ATP-grasp domain is found at 9 to 242; sequence KELFAKHGVP…RAATDPLEWK (234 aa). Residues K45, 52–54, S94, and E99 contribute to the ATP site; that span reads GRG. The Mg(2+) site is built by N191 and D211. Residues N262 and 324 to 326 contribute to the substrate site; that span reads GIT.

This sequence belongs to the succinate/malate CoA ligase beta subunit family. Heterotetramer of two alpha and two beta subunits. Requires Mg(2+) as cofactor.

The catalysed reaction is succinate + ATP + CoA = succinyl-CoA + ADP + phosphate. It catalyses the reaction GTP + succinate + CoA = succinyl-CoA + GDP + phosphate. The protein operates within carbohydrate metabolism; tricarboxylic acid cycle; succinate from succinyl-CoA (ligase route): step 1/1. In terms of biological role, succinyl-CoA synthetase functions in the citric acid cycle (TCA), coupling the hydrolysis of succinyl-CoA to the synthesis of either ATP or GTP and thus represents the only step of substrate-level phosphorylation in the TCA. The beta subunit provides nucleotide specificity of the enzyme and binds the substrate succinate, while the binding sites for coenzyme A and phosphate are found in the alpha subunit. The protein is Succinate--CoA ligase [ADP-forming] subunit beta of Mycobacterium leprae (strain Br4923).